A 156-amino-acid polypeptide reads, in one-letter code: Ribosomal RNA large subunit methyltransferase H (156 aa).

Residues Leu-73, Gly-104, and Leu-123–Leu-128 each bind S-adenosyl-L-methionine.

It belongs to the RNA methyltransferase RlmH family. As to quaternary structure, homodimer.

It localises to the cytoplasm. It catalyses the reaction pseudouridine(1915) in 23S rRNA + S-adenosyl-L-methionine = N(3)-methylpseudouridine(1915) in 23S rRNA + S-adenosyl-L-homocysteine + H(+). Specifically methylates the pseudouridine at position 1915 (m3Psi1915) in 23S rRNA. This Ralstonia nicotianae (strain ATCC BAA-1114 / GMI1000) (Ralstonia solanacearum) protein is Ribosomal RNA large subunit methyltransferase H.